A 103-amino-acid polypeptide reads, in one-letter code: Large ribosomal subunit protein bL21 (103 aa).

Belongs to the bacterial ribosomal protein bL21 family. In terms of assembly, part of the 50S ribosomal subunit. Contacts protein L20.

In terms of biological role, this protein binds to 23S rRNA in the presence of protein L20. The sequence is that of Large ribosomal subunit protein bL21 from Salmonella paratyphi A (strain ATCC 9150 / SARB42).